Here is a 163-residue protein sequence, read N- to C-terminus: Ureidoglycolate lyase 2 (163 aa).

It belongs to the ureidoglycolate lyase family. As to quaternary structure, homodimer. Ni(2+) serves as cofactor.

It carries out the reaction (S)-ureidoglycolate = urea + glyoxylate. It participates in nitrogen metabolism; (S)-allantoin degradation. Functionally, catalyzes the catabolism of the allantoin degradation intermediate (S)-ureidoglycolate, generating urea and glyoxylate. Involved in the utilization of allantoin as nitrogen source. This Rhizobium meliloti (strain 1021) (Ensifer meliloti) protein is Ureidoglycolate lyase 2.